A 358-amino-acid polypeptide reads, in one-letter code: Trace amine-associated receptor 7e (358 aa).

Topologically, residues 1-47 (MATDDASFPWDQDSILSRDLLSALSSQLCYENLNRSCIRSPYSPGPR) are extracellular. The N-linked (GlcNAc...) asparagine glycan is linked to Asn-34. Disulfide bonds link Cys-37–Cys-201 and Cys-120–Cys-205. The helical transmembrane segment at 48–68 (LILHAVFGFSAVLAVCGNLLV) threads the bilayer. Residues 69-83 (MTSILHFRQLHSPAN) are Cytoplasmic-facing. The chain crosses the membrane as a helical span at residues 84–104 (FLVASLACADLLVGLTVMPFS). Residues 105–121 (MVRSVEGCWYFGDIYCK) lie on the Extracellular side of the membrane. The helical transmembrane segment at 122–143 (FHSSFDVSFCYSSIFHLCFISV) threads the bilayer. The Cytoplasmic portion of the chain corresponds to 144–166 (DRYIAVSDPLIYLTRFTASVSGK). A helical membrane pass occupies residues 167–187 (CITFSWFLSIIYSFSLLYTGA). The Extracellular portion of the chain corresponds to 188-212 (SEAGLEDLVSALTCVGGCQLAVNQS). Residue Asn-210 is glycosylated (N-linked (GlcNAc...) asparagine). Residues 213-233 (WVFINFLLFLVPTLVMMTVYS) form a helical membrane-spanning segment. Over 234-274 (KVFLIAKQQAQNIEKIGKQTARASESYKDRVAKRERKAAKT) the chain is Cytoplasmic. The chain crosses the membrane as a helical span at residues 275 to 295 (LGITVAAFLLSWLPYFIDSII). The Extracellular portion of the chain corresponds to 296–309 (DAFLGFITPTYVYE). The helical transmembrane segment at 310–333 (ILVWIAYYNSAMNPLIYAFFYPWF) threads the bilayer. Residues 334-358 (RKAIKLIVTGKILRENSSATNLFPE) are Cytoplasmic-facing.

The protein belongs to the G-protein coupled receptor 1 family.

The protein resides in the cell membrane. In terms of biological role, olfactory receptor specific for N,N-dimethylalkylamines trace amines. Trace amine compounds are enriched in animal body fluids and act on trace amine-associated receptors (TAARs) to elicit both intraspecific and interspecific innate behaviors. Ligand-binding causes a conformation change that triggers signaling via G(s)-class of G alpha proteins (GNAL or GNAS). This chain is Trace amine-associated receptor 7e, found in Rattus norvegicus (Rat).